A 525-amino-acid polypeptide reads, in one-letter code: Peptide chain release factor 3 (525 aa).

A tr-type G domain is found at 8 to 276 (AMRRTFAIIS…AFVKEAPPPQ (269 aa)). Residues 17 to 24 (SHPDAGKT), 85 to 89 (DTPGH), and 139 to 142 (NKMD) each bind GTP.

Belongs to the TRAFAC class translation factor GTPase superfamily. Classic translation factor GTPase family. PrfC subfamily.

The protein localises to the cytoplasm. In terms of biological role, increases the formation of ribosomal termination complexes and stimulates activities of RF-1 and RF-2. It binds guanine nucleotides and has strong preference for UGA stop codons. It may interact directly with the ribosome. The stimulation of RF-1 and RF-2 is significantly reduced by GTP and GDP, but not by GMP. In Coxiella burnetii (strain RSA 331 / Henzerling II), this protein is Peptide chain release factor 3.